Here is a 505-residue protein sequence, read N- to C-terminus: 2-isopropylmalate synthase (505 aa).

The Pyruvate carboxyltransferase domain maps to 5–269; the sequence is IKIFDTTLRD…ETGIHTEYLY (265 aa). Residues D14, H204, H206, and N240 each contribute to the Mn(2+) site. Residues 393-505 form a regulatory domain region; sequence SLLYFHTFTG…AVNRFELRKR (113 aa).

It belongs to the alpha-IPM synthase/homocitrate synthase family. LeuA type 1 subfamily. In terms of assembly, homodimer. Mn(2+) is required as a cofactor.

It localises to the cytoplasm. It catalyses the reaction 3-methyl-2-oxobutanoate + acetyl-CoA + H2O = (2S)-2-isopropylmalate + CoA + H(+). Its pathway is amino-acid biosynthesis; L-leucine biosynthesis; L-leucine from 3-methyl-2-oxobutanoate: step 1/4. Catalyzes the condensation of the acetyl group of acetyl-CoA with 3-methyl-2-oxobutanoate (2-ketoisovalerate) to form 3-carboxy-3-hydroxy-4-methylpentanoate (2-isopropylmalate). In Sediminispirochaeta smaragdinae (strain DSM 11293 / JCM 15392 / SEBR 4228) (Spirochaeta smaragdinae), this protein is 2-isopropylmalate synthase.